The following is a 198-amino-acid chain: Na(+)-translocating NADH-quinone reductase subunit E (198 aa).

Helical transmembrane passes span 11–31 (SVFI…FLAV), 35–55 (VSTS…AVPV), 77–97 (FLNF…LEMF), 110–130 (GIFL…SFMV), 140–160 (VVYG…LAGL), and 176–196 (LGIT…FSGI).

The protein belongs to the NqrDE/RnfAE family. Composed of six subunits; NqrA, NqrB, NqrC, NqrD, NqrE and NqrF.

It is found in the cell inner membrane. The catalysed reaction is a ubiquinone + n Na(+)(in) + NADH + H(+) = a ubiquinol + n Na(+)(out) + NAD(+). Functionally, NQR complex catalyzes the reduction of ubiquinone-1 to ubiquinol by two successive reactions, coupled with the transport of Na(+) ions from the cytoplasm to the periplasm. NqrA to NqrE are probably involved in the second step, the conversion of ubisemiquinone to ubiquinol. In Actinobacillus succinogenes (strain ATCC 55618 / DSM 22257 / CCUG 43843 / 130Z), this protein is Na(+)-translocating NADH-quinone reductase subunit E.